We begin with the raw amino-acid sequence, 430 residues long: Lipoyl synthase, chloroplastic (430 aa).

Polar residues predominate over residues 1-16; that stretch reads MRSLATLHQSPASCSR. The transit peptide at 1 to 40 directs the protein to the chloroplast; that stretch reads MRSLATLHQSPASCSRSAPVAPCPARRANSSRRVARQGPR. Disordered regions lie at residues 1-55 and 85-119; these read MRSL…SEDV and HLRSKSKSAAPVSPFAAPSPGSPSASSMLGPSLGA. Residues 91–119 are compositionally biased toward low complexity; it reads KSAAPVSPFAAPSPGSPSASSMLGPSLGA. Residues Cys-155, Cys-160, Cys-166, Cys-183, Cys-187, Cys-190, and Ser-397 each contribute to the [4Fe-4S] cluster site. The region spanning 166–386 is the Radical SAM core domain; the sequence is CWNGELATAT…KFGQEEIGFR (221 aa).

It belongs to the radical SAM superfamily. Lipoyl synthase family. Requires [4Fe-4S] cluster as cofactor.

The protein resides in the plastid. The protein localises to the chloroplast. The enzyme catalyses [[Fe-S] cluster scaffold protein carrying a second [4Fe-4S](2+) cluster] + N(6)-octanoyl-L-lysyl-[protein] + 2 oxidized [2Fe-2S]-[ferredoxin] + 2 S-adenosyl-L-methionine + 4 H(+) = [[Fe-S] cluster scaffold protein] + N(6)-[(R)-dihydrolipoyl]-L-lysyl-[protein] + 4 Fe(3+) + 2 hydrogen sulfide + 2 5'-deoxyadenosine + 2 L-methionine + 2 reduced [2Fe-2S]-[ferredoxin]. It functions in the pathway protein modification; protein lipoylation via endogenous pathway; protein N(6)-(lipoyl)lysine from octanoyl-[acyl-carrier-protein]: step 2/2. Functionally, catalyzes the radical-mediated insertion of two sulfur atoms into the C-6 and C-8 positions of the octanoyl moiety bound to the lipoyl domains of lipoate-dependent enzymes, thereby converting the octanoylated domains into lipoylated derivatives. This chain is Lipoyl synthase, chloroplastic, found in Chlamydomonas reinhardtii (Chlamydomonas smithii).